The following is a 228-amino-acid chain: ATP synthase subunit a (228 aa).

7 consecutive transmembrane segments (helical) span residues 16–36 (GQEWIILSHYVLVIGIIFIIA), 45–65 (LVPTGSQNVLEAFVGGIISMG), 80–100 (LIGSLALVIFVSNMIGVIPGF), 106–126 (NINFTLSLALIVFVYYNYLGI), 138–158 (FMGPMPVLAPLMFPIEIISHL), 178–198 (FLMVLLMLVPWILPLPGFFLL), and 201–221 (FGVLQAFIFSILTYVYIAGSI).

The protein belongs to the ATPase A chain family. As to quaternary structure, F-type ATPases have 2 components, CF(1) - the catalytic core - and CF(0) - the membrane proton channel. CF(1) has five subunits: alpha(3), beta(3), gamma(1), delta(1), epsilon(1). CF(0) has three main subunits: a(1), b(2) and c(9-12). The alpha and beta chains form an alternating ring which encloses part of the gamma chain. CF(1) is attached to CF(0) by a central stalk formed by the gamma and epsilon chains, while a peripheral stalk is formed by the delta and b chains.

It is found in the cell inner membrane. Key component of the proton channel; it plays a direct role in the translocation of protons across the membrane. This Aliarcobacter butzleri (strain RM4018) (Arcobacter butzleri) protein is ATP synthase subunit a.